The following is an 86-amino-acid chain: Large ribosomal subunit protein eL43 (86 aa).

Residues Cys40, Cys43, Cys58, and Cys61 each contribute to the Zn(2+) site. The segment at 40 to 61 (CPFCRSKAVIREAYGIYRCKKC) adopts a C4-type zinc-finger fold.

The protein belongs to the eukaryotic ribosomal protein eL43 family. Putative zinc-binding subfamily. Part of the 50S ribosomal subunit. Requires Zn(2+) as cofactor.

Binds to the 23S rRNA. This is Large ribosomal subunit protein eL43 from Nanoarchaeum equitans (strain Kin4-M).